Here is a 230-residue protein sequence, read N- to C-terminus: Fibrillarin-like rRNA/tRNA 2'-O-methyltransferase (230 aa).

S-adenosyl-L-methionine contacts are provided by residues 87 to 88 (TT), 105 to 106 (EY), 130 to 131 (DA), and 150 to 153 (DVAQ).

As to quaternary structure, interacts with nop5. Component of box C/D small ribonucleoprotein (sRNP) particles that contain rpl7ae, FlpA and nop5, plus a guide RNA.

Involved in pre-rRNA and tRNA processing. Utilizes the methyl donor S-adenosyl-L-methionine to catalyze the site-specific 2'-hydroxyl methylation of ribose moieties in rRNA and tRNA. Site specificity is provided by a guide RNA that base pairs with the substrate. Methylation occurs at a characteristic distance from the sequence involved in base pairing with the guide RNA. The protein is Fibrillarin-like rRNA/tRNA 2'-O-methyltransferase of Methanocaldococcus jannaschii (strain ATCC 43067 / DSM 2661 / JAL-1 / JCM 10045 / NBRC 100440) (Methanococcus jannaschii).